Consider the following 220-residue polypeptide: Probable transaldolase (220 aa).

Lys-87 acts as the Schiff-base intermediate with substrate in catalysis.

Belongs to the transaldolase family. Type 3B subfamily.

The protein resides in the cytoplasm. It catalyses the reaction D-sedoheptulose 7-phosphate + D-glyceraldehyde 3-phosphate = D-erythrose 4-phosphate + beta-D-fructose 6-phosphate. It functions in the pathway carbohydrate degradation; pentose phosphate pathway; D-glyceraldehyde 3-phosphate and beta-D-fructose 6-phosphate from D-ribose 5-phosphate and D-xylulose 5-phosphate (non-oxidative stage): step 2/3. Functionally, transaldolase is important for the balance of metabolites in the pentose-phosphate pathway. In Porphyromonas gingivalis (strain ATCC 33277 / DSM 20709 / CIP 103683 / JCM 12257 / NCTC 11834 / 2561), this protein is Probable transaldolase.